Reading from the N-terminus, the 274-residue chain is Rhamnulose-1-phosphate aldolase (274 aa).

Glutamate 117 is a catalytic residue. 3 residues coordinate Zn(2+): histidine 141, histidine 143, and histidine 212.

It belongs to the aldolase class II family. RhaD subfamily. Homotetramer. Requires Zn(2+) as cofactor.

The protein localises to the cytoplasm. It carries out the reaction L-rhamnulose 1-phosphate = (S)-lactaldehyde + dihydroxyacetone phosphate. Its pathway is carbohydrate degradation; L-rhamnose degradation; glycerone phosphate from L-rhamnose: step 3/3. In terms of biological role, catalyzes the reversible cleavage of L-rhamnulose-1-phosphate to dihydroxyacetone phosphate (DHAP) and L-lactaldehyde. The protein is Rhamnulose-1-phosphate aldolase of Escherichia coli O45:K1 (strain S88 / ExPEC).